A 310-amino-acid polypeptide reads, in one-letter code: Lipoyl synthase (310 aa).

Residues C51, C56, C62, C77, C81, C84, and S290 each coordinate [4Fe-4S] cluster. The 218-residue stretch at 63–280 (WSRKTATYLA…RRVGESLGLF (218 aa)) folds into the Radical SAM core domain.

The protein belongs to the radical SAM superfamily. Lipoyl synthase family. Requires [4Fe-4S] cluster as cofactor.

It is found in the cytoplasm. It catalyses the reaction [[Fe-S] cluster scaffold protein carrying a second [4Fe-4S](2+) cluster] + N(6)-octanoyl-L-lysyl-[protein] + 2 oxidized [2Fe-2S]-[ferredoxin] + 2 S-adenosyl-L-methionine + 4 H(+) = [[Fe-S] cluster scaffold protein] + N(6)-[(R)-dihydrolipoyl]-L-lysyl-[protein] + 4 Fe(3+) + 2 hydrogen sulfide + 2 5'-deoxyadenosine + 2 L-methionine + 2 reduced [2Fe-2S]-[ferredoxin]. Its pathway is protein modification; protein lipoylation via endogenous pathway; protein N(6)-(lipoyl)lysine from octanoyl-[acyl-carrier-protein]: step 2/2. In terms of biological role, catalyzes the radical-mediated insertion of two sulfur atoms into the C-6 and C-8 positions of the octanoyl moiety bound to the lipoyl domains of lipoate-dependent enzymes, thereby converting the octanoylated domains into lipoylated derivatives. This Chlamydia abortus (strain DSM 27085 / S26/3) (Chlamydophila abortus) protein is Lipoyl synthase.